We begin with the raw amino-acid sequence, 269 residues long: Hydroxyethylthiazole kinase (269 aa).

Met46 contacts substrate. ATP is bound by residues Arg121 and Thr166. Gly193 is a substrate binding site.

It belongs to the Thz kinase family. Mg(2+) serves as cofactor.

The catalysed reaction is 5-(2-hydroxyethyl)-4-methylthiazole + ATP = 4-methyl-5-(2-phosphooxyethyl)-thiazole + ADP + H(+). It participates in cofactor biosynthesis; thiamine diphosphate biosynthesis; 4-methyl-5-(2-phosphoethyl)-thiazole from 5-(2-hydroxyethyl)-4-methylthiazole: step 1/1. Catalyzes the phosphorylation of the hydroxyl group of 4-methyl-5-beta-hydroxyethylthiazole (THZ). This chain is Hydroxyethylthiazole kinase, found in Limosilactobacillus reuteri (strain DSM 20016) (Lactobacillus reuteri).